A 212-amino-acid chain; its full sequence is Ribosomal RNA small subunit methyltransferase G (212 aa).

S-adenosyl-L-methionine is bound by residues Gly-72, Leu-77, 123–124 (VE), and Arg-138.

The protein belongs to the methyltransferase superfamily. RNA methyltransferase RsmG family.

It localises to the cytoplasm. It carries out the reaction guanosine(527) in 16S rRNA + S-adenosyl-L-methionine = N(7)-methylguanosine(527) in 16S rRNA + S-adenosyl-L-homocysteine. Its function is as follows. Specifically methylates the N7 position of guanine in position 527 of 16S rRNA. This chain is Ribosomal RNA small subunit methyltransferase G, found in Histophilus somni (strain 129Pt) (Haemophilus somnus).